The sequence spans 157 residues: 2-C-methyl-D-erythritol 2,4-cyclodiphosphate synthase (157 aa).

Positions 9 and 11 each coordinate a divalent metal cation. 4-CDP-2-C-methyl-D-erythritol 2-phosphate-binding positions include Asp-9 to His-11 and His-35 to Ser-36. A divalent metal cation is bound at residue His-43. 4-CDP-2-C-methyl-D-erythritol 2-phosphate-binding positions include Asp-57–Gly-59, Phe-62–Asp-66, Ala-101–Ala-107, Thr-133–Glu-136, Phe-140, and Arg-143.

The protein belongs to the IspF family. In terms of assembly, homotrimer. The cofactor is a divalent metal cation.

It carries out the reaction 4-CDP-2-C-methyl-D-erythritol 2-phosphate = 2-C-methyl-D-erythritol 2,4-cyclic diphosphate + CMP. The protein operates within isoprenoid biosynthesis; isopentenyl diphosphate biosynthesis via DXP pathway; isopentenyl diphosphate from 1-deoxy-D-xylulose 5-phosphate: step 4/6. Functionally, involved in the biosynthesis of isopentenyl diphosphate (IPP) and dimethylallyl diphosphate (DMAPP), two major building blocks of isoprenoid compounds. Catalyzes the conversion of 4-diphosphocytidyl-2-C-methyl-D-erythritol 2-phosphate (CDP-ME2P) to 2-C-methyl-D-erythritol 2,4-cyclodiphosphate (ME-CPP) with a corresponding release of cytidine 5-monophosphate (CMP). This chain is 2-C-methyl-D-erythritol 2,4-cyclodiphosphate synthase, found in Listeria monocytogenes serovar 1/2a (strain ATCC BAA-679 / EGD-e).